A 430-amino-acid polypeptide reads, in one-letter code: BSD domain-containing protein 1 (430 aa).

Phosphoserine occurs at positions 92 and 166. Positions tryptophan 146–glutamate 198 constitute a BSD domain. Disordered regions lie at residues serine 247–alanine 298 and leucine 319–aspartate 398. Polar residues predominate over residues proline 276 to asparagine 291. Basic and acidic residues predominate over residues proline 350–valine 367. At threonine 356 the chain carries Phosphothreonine. Positions asparagine 371–aspartate 390 are enriched in polar residues. Phosphoserine occurs at positions 387, 388, and 418.

In Homo sapiens (Human), this protein is BSD domain-containing protein 1 (BSDC1).